Here is a 342-residue protein sequence, read N- to C-terminus: Anthranilate phosphoribosyltransferase (342 aa).

5-phospho-alpha-D-ribose 1-diphosphate is bound by residues G74, 77–78 (GD), T82, 84–87 (NVST), 101–109 (KHGNRSVSG), and S113. G74 contacts anthranilate. S86 contributes to the Mg(2+) binding site. N104 contacts anthranilate. R159 is an anthranilate binding site. Mg(2+)-binding residues include D218 and E219.

This sequence belongs to the anthranilate phosphoribosyltransferase family. As to quaternary structure, homodimer. Mg(2+) serves as cofactor.

The catalysed reaction is N-(5-phospho-beta-D-ribosyl)anthranilate + diphosphate = 5-phospho-alpha-D-ribose 1-diphosphate + anthranilate. It functions in the pathway amino-acid biosynthesis; L-tryptophan biosynthesis; L-tryptophan from chorismate: step 2/5. In terms of biological role, catalyzes the transfer of the phosphoribosyl group of 5-phosphorylribose-1-pyrophosphate (PRPP) to anthranilate to yield N-(5'-phosphoribosyl)-anthranilate (PRA). This is Anthranilate phosphoribosyltransferase from Sulfolobus acidocaldarius (strain ATCC 33909 / DSM 639 / JCM 8929 / NBRC 15157 / NCIMB 11770).